A 316-amino-acid chain; its full sequence is Carbamate kinase-like protein YahI (316 aa).

It belongs to the carbamate kinase family.

The protein is Carbamate kinase-like protein YahI (yahI) of Escherichia coli (strain K12).